The chain runs to 89 residues: Endoribonuclease VapD 1 (89 aa).

Belongs to the VapD ribonuclease family. In terms of assembly, homodimer.

Cleaves ssRNA, mostly between U:A. This chain is Endoribonuclease VapD 1, found in Riemerella anatipestifer (Moraxella anatipestifer).